Here is a 396-residue protein sequence, read N- to C-terminus: S100P-binding protein (396 aa).

A disordered region spans residues 145–249 (CDPVLDKDKI…RKNSGSHKSG (105 aa)). 2 stretches are compositionally biased toward basic and acidic residues: residues 148–161 (VLDKDKIDSSKETE) and 168–185 (EQTREDDPQPNESKRCTE). Polar residues-rich tracts occupy residues 202–215 (SSPSNNNIEQTASD) and 227–246 (VFSQISNHSEVPNRKNSGSH).

Interacts with S100P.

It localises to the nucleus. The protein is S100P-binding protein of Mus musculus (Mouse).